The sequence spans 177 residues: Transcription termination/antitermination protein NusG (177 aa).

The region spanning glutamate 128–valine 156 is the KOW domain.

This sequence belongs to the NusG family.

Participates in transcription elongation, termination and antitermination. Stimulates RNA polymerase pausing at U107 and U144 in the trp leader. NusG-stimulated pausing is sequence specific. Does not affect trp leader termination. This chain is Transcription termination/antitermination protein NusG, found in Bacillus subtilis (strain 168).